We begin with the raw amino-acid sequence, 64 residues long: Large ribosomal subunit protein bL33 (64 aa).

The protein belongs to the bacterial ribosomal protein bL33 family.

The polypeptide is Large ribosomal subunit protein bL33 (Nostoc sp. (strain PCC 7120 / SAG 25.82 / UTEX 2576)).